The sequence spans 577 residues: Mitochondrial-processing peptidase subunit alpha (577 aa).

The N-terminal 35 residues, 1–35 (MLNRFRPARLVAQSSRCLPLTRARAGPLPVNNART), are a transit peptide targeting the mitochondrion. The interval 259 to 301 (SDAPGLSRTGSETSVDSLVSESSEASSESSSSSSDSSESSGGL) is disordered. Positions 269–301 (SETSVDSLVSESSEASSESSSSSSDSSESSGGL) are enriched in low complexity.

This sequence belongs to the peptidase M16 family. As to quaternary structure, heterodimer of mpp (alpha) and pep (beta) subunits, forming the mitochondrial processing protease (MPP) in which mpp is involved in substrate recognition and binding and pep is the catalytic subunit.

It is found in the mitochondrion matrix. Functionally, substrate recognition and binding subunit of the essential mitochondrial processing protease (MPP), which cleaves the mitochondrial sequence off newly imported precursors proteins. The sequence is that of Mitochondrial-processing peptidase subunit alpha from Neurospora crassa (strain ATCC 24698 / 74-OR23-1A / CBS 708.71 / DSM 1257 / FGSC 987).